Here is a 469-residue protein sequence, read N- to C-terminus: Mitochondrial adenyl nucleotide antiporter SLC25A25 (469 aa).

Positions 1 to 165 are regulatory N-terminal domain; it reads MLCLCLYVPI…LYWKHSTIFD (165 aa). Topologically, residues 1-189 are mitochondrial intermembrane; sequence MLCLCLYVPI…ERQTGMWWRH (189 aa). EF-hand domains follow at residues 47–80, 78–113, and 114–149; these read TYRQWKQKIVQAGDKDLDGQLDFEEFVHYLQDHE, DHEKKLRLVFKSLDKKNDGRIDAQEIMQSLRDLGVK, and ISEQQAEKILKSMDKNGTMTIDWNEWRDYHLLHPVE. Residues Asp60, Asp62, Asp64, Gln66, and Glu71 each coordinate Ca(2+). A linker region region spans residues 151–160; sequence IPEIILYWKH. Residues 166 to 469 form a C-terminal transmembrane transporter domain region; it reads VGENLTVPDE…LKITLGVQSR (304 aa). Solcar repeat units follow at residues 184 to 270, 278 to 363, and 375 to 463; these read GMWW…MKRL, LRIH…LKNT, and PGVF…LKIT. A helical membrane pass occupies residues 190-207; the sequence is LVAGGGAGAVSRTCTAPL. Residues 208–244 lie on the Mitochondrial matrix side of the membrane; the sequence is DRLKVLMQVHASRSNNMCIVGGFTQMIREGGAKSLWR. The chain crosses the membrane as a helical span at residues 245-264; it reads GNGINVLKIAPESAIKFMAY. Residues 265–287 are Mitochondrial intermembrane-facing; the sequence is EQMKRLVGSDQETLRIHERLVAG. The helical transmembrane segment at 288-301 threads the bilayer; the sequence is SLAGAIAQSSIYPM. Residues 302-337 are Mitochondrial matrix-facing; that stretch reads EVLKTRMALRKTGQYSGMLDCARRILAKEGVAAFYK. Residues 338-357 traverse the membrane as a helical segment; it reads GYIPNMLGIIPYAGIDLAVY. Residues 358 to 380 are Mitochondrial intermembrane-facing; that stretch reads ETLKNTWLQRYAVNSADPGVFVL. The helical transmembrane segment at 381 to 398 threads the bilayer; sequence LACGTISSTCGQLASYPL. Residues 399-437 are Mitochondrial matrix-facing; the sequence is ALVRTRMQAQASIEGAPEVTMSSLFKQILRTEGAFGLYR. Residues 438–457 form a helical membrane-spanning segment; sequence GLAPNFMKVIPAVSISYVVY. At 458 to 469 the chain is on the mitochondrial intermembrane side; sequence ENLKITLGVQSR.

The protein belongs to the mitochondrial carrier (TC 2.A.29) family.

It is found in the mitochondrion inner membrane. The enzyme catalyses Mg(2+)(out) + phosphate(in) + ATP(out) = Mg(2+)(in) + phosphate(out) + ATP(in). With respect to regulation, activated by an increase in cytosolic calcium levels that induce a conformational change of the N-terminal regulatory domain, uncapping the channel and allowing transport. Electroneutral antiporter that most probably mediates the transport of adenyl nucleotides through the inner mitochondrial membrane. Originally identified as an ATP-magnesium/inorganic phosphate antiporter, it could have a broader specificity for adenyl nucleotides. By regulating the mitochondrial matrix adenyl nucleotide pool could adapt to changing cellular energetic demands and indirectly regulate adenyl nucleotide-dependent metabolic pathways. This is Mitochondrial adenyl nucleotide antiporter SLC25A25 from Mus musculus (Mouse).